Here is a 666-residue protein sequence, read N- to C-terminus: Probable potassium transport system protein Kup (666 aa).

The next 12 membrane-spanning stretches (helical) occupy residues 53–73, 89–109, 144–164, 181–201, 212–232, 247–267, 291–311, 324–344, 381–401, 411–431, 441–461, and 463–483; these read FWAL…TSPL, VTPV…FIVV, LLLL…SMIT, PEFG…LFAV, AFAP…ALHI, AIHF…LVFL, WFCL…ALIL, LAPA…TVIA, IYLP…VLLF, YGIA…VVVW, AAAL…ANLL, and LLDG…LIWT.

It belongs to the HAK/KUP transporter (TC 2.A.72) family.

Its subcellular location is the cell inner membrane. The catalysed reaction is K(+)(in) + H(+)(in) = K(+)(out) + H(+)(out). Transport of potassium into the cell. Likely operates as a K(+):H(+) symporter. The protein is Probable potassium transport system protein Kup of Nitrobacter hamburgensis (strain DSM 10229 / NCIMB 13809 / X14).